Here is a 133-residue protein sequence, read N- to C-terminus: Membrane protein FAM174B (133 aa).

Positions 1–19 (MWLYTFAVALIVIAQEING) are cleaved as a signal peptide. The Extracellular portion of the chain corresponds to 20 to 67 (EPHTRPSSATPLNATLPPQEEGSAQNTTDAAVGSRLSTILRDLPTIKN). The disordered stretch occupies residues 22 to 47 (HTRPSSATPLNATLPPQEEGSAQNTT). 3 N-linked (GlcNAc...) asparagine glycosylation sites follow: Asn32, Asn45, and Asn67. A helical membrane pass occupies residues 68 to 88 (ISIFICVLTTLLITCLVIKIC). Topologically, residues 89–133 (RSARKIRKTRKYDIITTPAERVEMAPLNEENDEEDDSTLFDVKYR) are cytoplasmic. The disordered stretch occupies residues 113-133 (APLNEENDEEDDSTLFDVKYR). Positions 117 to 126 (EENDEEDDST) are enriched in acidic residues.

Belongs to the FAM174 family.

The protein resides in the cell membrane. It is found in the golgi apparatus. Its function is as follows. Essential for Golgi structural integrity. The protein is Membrane protein FAM174B (Fam174b) of Danio rerio (Zebrafish).